Here is a 471-residue protein sequence, read N- to C-terminus: Alpha-galactosidase (471 aa).

Positions 1-18 are cleaved as a signal peptide; sequence MSYIYLFITAAAVTGALG. Cysteines 42 and 74 form a disulfide. Substrate-binding residues include aspartate 72 and aspartate 73. N-linked (GlcNAc...) asparagine glycosylation is present at asparagine 82. A disulfide bridge connects residues cysteine 121 and cysteine 151. Residue lysine 147 participates in substrate binding. The active-site Nucleophile is aspartate 149. Asparagine 175 is a glycosylation site (N-linked (GlcNAc...) asparagine). Arginine 205 is a substrate binding site. Residue aspartate 209 is the Proton donor of the active site. 2 disulfide bridges follow: cysteine 221/cysteine 237 and cysteine 223/cysteine 230. Glutamine 251 lines the substrate pocket. Asparagine 270, asparagine 361, asparagine 370, asparagine 417, asparagine 422, asparagine 435, and asparagine 454 each carry an N-linked (GlcNAc...) asparagine glycan.

Belongs to the glycosyl hydrolase 27 family. Homotetramer.

Its subcellular location is the secreted. It carries out the reaction Hydrolysis of terminal, non-reducing alpha-D-galactose residues in alpha-D-galactosides, including galactose oligosaccharides, galactomannans and galactolipids.. In Saccharomyces mikatae (Yeast), this protein is Alpha-galactosidase (MEL).